The chain runs to 1184 residues: DNA-directed RNA polymerase subunit beta (1184 aa).

The segment at 1160 to 1184 is disordered; sequence DDDFTNQNDAFNIVQPENAAAEKTE.

The protein belongs to the RNA polymerase beta chain family. As to quaternary structure, the RNAP catalytic core consists of 2 alpha, 1 beta, 1 beta' and 1 omega subunit. When a sigma factor is associated with the core the holoenzyme is formed, which can initiate transcription.

The catalysed reaction is RNA(n) + a ribonucleoside 5'-triphosphate = RNA(n+1) + diphosphate. Functionally, DNA-dependent RNA polymerase catalyzes the transcription of DNA into RNA using the four ribonucleoside triphosphates as substrates. This Listeria welshimeri serovar 6b (strain ATCC 35897 / DSM 20650 / CCUG 15529 / CIP 8149 / NCTC 11857 / SLCC 5334 / V8) protein is DNA-directed RNA polymerase subunit beta.